We begin with the raw amino-acid sequence, 55 residues long: MAKGIREKIKLVSSAGTGHFYTTTKNKRTMPEKLEMKKFDPVVRQHVTYKEAKIK.

It belongs to the bacterial ribosomal protein bL33 family.

The polypeptide is Large ribosomal subunit protein bL33 (Proteus mirabilis (strain HI4320)).